We begin with the raw amino-acid sequence, 217 residues long: Magnetosome protein MamA (217 aa).

TPR repeat units follow at residues 12–44, 46–79, 80–113, 114–147, 148–181, and 182–215; these read VTLYTHYGLSVAKKLGANMVDAFRSAFSVNDDI, QVYYRDKGISHAKAGRYSEAVVMLEQVYDADAFD, VEVALHLGIAYVKTGAVDRGTELLERSIADAPDN, IKVATVLGLTYVQVQKYDLAVPLLVKVAEANPVN, FNVRFRLGVALDNLGRFDEAIDSFKIALGLRPNE, and GKVHRAIAYSYEQMGSHEEALPHFKKANELDERS. The tract at residues 41–112 is N-terminal domain; sequence NDDIRQVYYR…LERSIADAPD (72 aa). Residues 113 to 217 form a C-terminal domain region; it reads NIKVATVLGL…ANELDERSAV (105 aa).

It belongs to the magnetosome MamA family. As to quaternary structure, forms round, 20 nm diameter complexes with a central cavity. Probably binds MamC. Interacts with full-length Mms6.

The protein resides in the magnetosome membrane. In terms of biological role, probably forms a large homooligomer on which other magnetosome subunits assemble. Required for formation of functional magnetosomes from pre-existing vesicles. This Magnetospirillum gryphiswaldense (strain DSM 6361 / JCM 21280 / NBRC 15271 / MSR-1) protein is Magnetosome protein MamA.